A 466-amino-acid polypeptide reads, in one-letter code: UDP-N-acetylmuramoylalanine--D-glutamate ligase (466 aa).

124-130 (GSDGKTT) contributes to the ATP binding site.

The protein belongs to the MurCDEF family.

It is found in the cytoplasm. The catalysed reaction is UDP-N-acetyl-alpha-D-muramoyl-L-alanine + D-glutamate + ATP = UDP-N-acetyl-alpha-D-muramoyl-L-alanyl-D-glutamate + ADP + phosphate + H(+). Its pathway is cell wall biogenesis; peptidoglycan biosynthesis. Functionally, cell wall formation. Catalyzes the addition of glutamate to the nucleotide precursor UDP-N-acetylmuramoyl-L-alanine (UMA). The chain is UDP-N-acetylmuramoylalanine--D-glutamate ligase from Acetivibrio thermocellus (strain ATCC 27405 / DSM 1237 / JCM 9322 / NBRC 103400 / NCIMB 10682 / NRRL B-4536 / VPI 7372) (Clostridium thermocellum).